The sequence spans 394 residues: RNA-binding motif protein, X-linked-like-2 (394 aa).

The 79-residue stretch at 8 to 86 folds into the RRM domain; sequence GKLFIGGLNL…KAIKVAQATK (79 aa). Basic and acidic residues predominate over residues 67–78; the sequence is RDMNGKSLDGKA. Positions 67–394 are disordered; sequence RDMNGKSLDG…MERGGGRSRY (328 aa). Residues 150–165 show a composition bias toward pro residues; that stretch reads RGPPPPPRRAGPPPKR. Composition is skewed to basic and acidic residues over residues 196–231 and 239–285; these read PRREPPPPRRDPYLGPRDEGYSSRDGYSSRDYREPR and EYTH…REPF. Residues 321-333 show a composition bias toward low complexity; the sequence is YSGGRDSYSSSYG. Composition is skewed to basic and acidic residues over residues 334–350 and 383–394; these read RSDRYSRGRDRVGRPDR and GRMERGGGRSRY.

It is found in the nucleus. This Macaca fascicularis (Crab-eating macaque) protein is RNA-binding motif protein, X-linked-like-2 (RBMXL2).